The chain runs to 284 residues: Bifunctional protein FolD (284 aa).

NADP(+) contacts are provided by residues 166-168 (GAS) and Ile-232.

Belongs to the tetrahydrofolate dehydrogenase/cyclohydrolase family. In terms of assembly, homodimer.

It carries out the reaction (6R)-5,10-methylene-5,6,7,8-tetrahydrofolate + NADP(+) = (6R)-5,10-methenyltetrahydrofolate + NADPH. The catalysed reaction is (6R)-5,10-methenyltetrahydrofolate + H2O = (6R)-10-formyltetrahydrofolate + H(+). It participates in one-carbon metabolism; tetrahydrofolate interconversion. In terms of biological role, catalyzes the oxidation of 5,10-methylenetetrahydrofolate to 5,10-methenyltetrahydrofolate and then the hydrolysis of 5,10-methenyltetrahydrofolate to 10-formyltetrahydrofolate. This Shewanella sp. (strain MR-7) protein is Bifunctional protein FolD.